The following is a 270-amino-acid chain: Regulatory protein RecX (270 aa).

The protein belongs to the RecX family.

The protein localises to the cytoplasm. Its function is as follows. Modulates RecA activity. This chain is Regulatory protein RecX, found in Bacillus cereus (strain AH187).